The sequence spans 89 residues: Small ribosomal subunit protein uS14 (89 aa).

The protein belongs to the universal ribosomal protein uS14 family. As to quaternary structure, part of the 30S ribosomal subunit. Contacts proteins S3 and S10.

Its function is as follows. Binds 16S rRNA, required for the assembly of 30S particles and may also be responsible for determining the conformation of the 16S rRNA at the A site. This is Small ribosomal subunit protein uS14 from Parabacteroides distasonis (strain ATCC 8503 / DSM 20701 / CIP 104284 / JCM 5825 / NCTC 11152).